The primary structure comprises 360 residues: Phospho-N-acetylmuramoyl-pentapeptide-transferase (360 aa).

10 consecutive transmembrane segments (helical) span residues Phe16–Leu36, Thr73–Leu93, Tyr97–Tyr117, Tyr134–Thr154, Tyr168–Ser188, Gly199–Ser219, Ala236–Phe256, Val263–Ile283, Ile288–Val308, and Val338–Lys358.

The protein belongs to the glycosyltransferase 4 family. MraY subfamily. It depends on Mg(2+) as a cofactor.

The protein localises to the cell inner membrane. The catalysed reaction is UDP-N-acetyl-alpha-D-muramoyl-L-alanyl-gamma-D-glutamyl-meso-2,6-diaminopimeloyl-D-alanyl-D-alanine + di-trans,octa-cis-undecaprenyl phosphate = di-trans,octa-cis-undecaprenyl diphospho-N-acetyl-alpha-D-muramoyl-L-alanyl-D-glutamyl-meso-2,6-diaminopimeloyl-D-alanyl-D-alanine + UMP. It functions in the pathway cell wall biogenesis; peptidoglycan biosynthesis. In terms of biological role, catalyzes the initial step of the lipid cycle reactions in the biosynthesis of the cell wall peptidoglycan: transfers peptidoglycan precursor phospho-MurNAc-pentapeptide from UDP-MurNAc-pentapeptide onto the lipid carrier undecaprenyl phosphate, yielding undecaprenyl-pyrophosphoryl-MurNAc-pentapeptide, known as lipid I. The polypeptide is Phospho-N-acetylmuramoyl-pentapeptide-transferase (Pseudomonas fluorescens (strain Pf0-1)).